The chain runs to 61 residues: Small ribosomal subunit protein uS14 (61 aa).

Positions 24, 27, 40, and 43 each coordinate Zn(2+).

This sequence belongs to the universal ribosomal protein uS14 family. Zinc-binding uS14 subfamily. Part of the 30S ribosomal subunit. Contacts proteins S3 and S10. Zn(2+) is required as a cofactor.

Functionally, binds 16S rRNA, required for the assembly of 30S particles and may also be responsible for determining the conformation of the 16S rRNA at the A site. The sequence is that of Small ribosomal subunit protein uS14 from Clostridium kluyveri (strain NBRC 12016).